We begin with the raw amino-acid sequence, 624 residues long: MKGQETRGFQSEVKQLLHLMIHSLYSNKEIFLRELISNASDAADKLRFRALSQPDLYEGDGELRVRVSFDKDNRTLTIADNGIGMNREEVIDHLGTIAKSGTKAFLESMGSDQAKDSQLIGQFGVGFYSAFIVADKVTVRTRAAGDKPENGVFWESAGEGEYTVADITKADRGTEITLHLREGEDDFLNDWRVRSIISKYSDHIALPVEIEKREEKDGETVISWEKINKAQALWTRSKSEVNDDEYKEFYKHIAHDYSDPLTWSHNRVEGKQEYTSLLYIPSQAPWDMWNRDHKHGLKLYVQRVFIMDDAEQFMPNYLRFVRGLIDSNDLPLNVSREILQDSSVTRNLRTALTKRALQMLDKLAKDDAEKYQTFWKQFGLVLKEGPAEDPSNQEAIAKLLRFATTHTDSSAQTVSLEEYVSRMKEGQEKIYYITADSYAAAKSSPHLELLRKKGIEVLLLSDRIDEWMMSYLTEFDGKAFQSVAKADESLDKLADEVDESTKEAEKALEPFVERVKNLLGDRVKEVRLTHRLTDTPAIVTTDADEMSTQMAKLFAAAGQAAPEVKYIFELNPAHQLVKRAADTQDDAQFGEWVELLLDQALLAERGTLEDPNQFIRRMNQLLAS.

Residues 1–336 (MKGQETRGFQ…SNDLPLNVSR (336 aa)) are a; substrate-binding. Residues 337–552 (EILQDSSVTR…ADEMSTQMAK (216 aa)) form a b region. Residues 553-624 (LFAAAGQAAP…IRRMNQLLAS (72 aa)) are c.

This sequence belongs to the heat shock protein 90 family. As to quaternary structure, homodimer.

It is found in the cytoplasm. In terms of biological role, molecular chaperone. Has ATPase activity. The protein is Chaperone protein HtpG of Klebsiella pneumoniae subsp. pneumoniae (strain ATCC 700721 / MGH 78578).